An 808-amino-acid polypeptide reads, in one-letter code: Bifunctional uridylyltransferase/uridylyl-removing enzyme (808 aa).

Positions 1-315 (MEAESPCAAS…ALVRRPKRRP (315 aa)) are uridylyltransferase. The tract at residues 316–609 (LDEGVVEYAG…EISPRDGERI (294 aa)) is uridylyl-removing. One can recognise an HD domain in the interval 430 to 544 (VDRHVVETAV…LEVLHALSEA (115 aa)). 2 consecutive ACT domains span residues 610–686 (DAVI…GMLQ) and 730–805 (ILEV…VDEP).

Belongs to the GlnD family. The cofactor is Mg(2+).

It carries out the reaction [protein-PII]-L-tyrosine + UTP = [protein-PII]-uridylyl-L-tyrosine + diphosphate. The enzyme catalyses [protein-PII]-uridylyl-L-tyrosine + H2O = [protein-PII]-L-tyrosine + UMP + H(+). Modifies, by uridylylation and deuridylylation, the PII regulatory protein (GlnB), in response to the nitrogen status of the cell that GlnD senses through the glutamine level. Under low glutamine levels, catalyzes the conversion of the PII protein and UTP to PII-UMP and PPi, while under higher glutamine levels, GlnD hydrolyzes PII-UMP to PII and UMP (deuridylylation). Thus, controls uridylylation state and activity of the PII protein, and plays an important role in the regulation of nitrogen assimilation and metabolism. The protein is Bifunctional uridylyltransferase/uridylyl-removing enzyme of Mycobacterium tuberculosis (strain CDC 1551 / Oshkosh).